The sequence spans 1881 residues: Nuclear pore membrane glycoprotein 210-like (1881 aa).

Residues 1-32 form the signal peptide; that stretch reads MIAFGAPRRRSFGLLFSLAPHLFFLFLIGTLA. N-linked (GlcNAc...) asparagine glycans are attached at residues Asn-80, Asn-344, and Asn-808. The BIG2 domain maps to 1078–1150; the sequence is FPPFRLIPEK…TIQTVNEDTG (73 aa). Residue Asn-1441 is glycosylated (N-linked (GlcNAc...) asparagine). The chain crosses the membrane as a helical span at residues 1804–1824; that stretch reads YQILLFTLFAVLASTSFIFLA.

The protein belongs to the NUP210 family. As to expression, expressed in testis.

It localises to the nucleus membrane. The protein localises to the nucleus. It is found in the nucleoplasm. The chain is Nuclear pore membrane glycoprotein 210-like (Nup210l) from Mus musculus (Mouse).